Reading from the N-terminus, the 343-residue chain is Methylthioribose-1-phosphate isomerase (343 aa).

Residues arginine 44–alanine 46, arginine 85, and glutamine 192 contribute to the substrate site. Residue aspartate 233 is the Proton donor of the active site. Asparagine 243 to lysine 244 contacts substrate.

The protein belongs to the eIF-2B alpha/beta/delta subunits family. MtnA subfamily.

It carries out the reaction 5-(methylsulfanyl)-alpha-D-ribose 1-phosphate = 5-(methylsulfanyl)-D-ribulose 1-phosphate. It participates in amino-acid biosynthesis; L-methionine biosynthesis via salvage pathway; L-methionine from S-methyl-5-thio-alpha-D-ribose 1-phosphate: step 1/6. Its function is as follows. Catalyzes the interconversion of methylthioribose-1-phosphate (MTR-1-P) into methylthioribulose-1-phosphate (MTRu-1-P). The polypeptide is Methylthioribose-1-phosphate isomerase (Carboxydothermus hydrogenoformans (strain ATCC BAA-161 / DSM 6008 / Z-2901)).